We begin with the raw amino-acid sequence, 296 residues long: ATP synthase gamma chain (296 aa).

The segment at 194–216 is disordered; that stretch reads IPASAGQAANDNAGSDQPAGDYE.

It belongs to the ATPase gamma chain family. As to quaternary structure, F-type ATPases have 2 components, CF(1) - the catalytic core - and CF(0) - the membrane proton channel. CF(1) has five subunits: alpha(3), beta(3), gamma(1), delta(1), epsilon(1). CF(0) has three main subunits: a, b and c.

It is found in the cell inner membrane. Its function is as follows. Produces ATP from ADP in the presence of a proton gradient across the membrane. The gamma chain is believed to be important in regulating ATPase activity and the flow of protons through the CF(0) complex. The sequence is that of ATP synthase gamma chain from Acidiphilium cryptum (strain JF-5).